Reading from the N-terminus, the 273-residue chain is Putative phosphoenolpyruvate synthase regulatory protein (273 aa).

153–160 lines the ADP pocket; it reads GVSRSGKT.

Belongs to the pyruvate, phosphate/water dikinase regulatory protein family. PSRP subfamily.

It catalyses the reaction [pyruvate, water dikinase] + ADP = [pyruvate, water dikinase]-phosphate + AMP + H(+). The catalysed reaction is [pyruvate, water dikinase]-phosphate + phosphate + H(+) = [pyruvate, water dikinase] + diphosphate. In terms of biological role, bifunctional serine/threonine kinase and phosphorylase involved in the regulation of the phosphoenolpyruvate synthase (PEPS) by catalyzing its phosphorylation/dephosphorylation. The sequence is that of Putative phosphoenolpyruvate synthase regulatory protein from Verminephrobacter eiseniae (strain EF01-2).